Here is a 150-residue protein sequence, read N- to C-terminus: UPF0098 protein CPn_0877/CP_0992/CPj0877/CpB0906 (150 aa).

This sequence belongs to the UPF0098 family.

In Chlamydia pneumoniae (Chlamydophila pneumoniae), this protein is UPF0098 protein CPn_0877/CP_0992/CPj0877/CpB0906.